Consider the following 439-residue polypeptide: Glucose-1-phosphate adenylyltransferase (439 aa).

Alpha-D-glucose 1-phosphate contacts are provided by residues Y116, G182, 197–198 (EK), and S215.

It belongs to the bacterial/plant glucose-1-phosphate adenylyltransferase family. In terms of assembly, homotetramer.

It catalyses the reaction alpha-D-glucose 1-phosphate + ATP + H(+) = ADP-alpha-D-glucose + diphosphate. The protein operates within glycan biosynthesis; glycogen biosynthesis. Its function is as follows. Involved in the biosynthesis of ADP-glucose, a building block required for the elongation reactions to produce glycogen. Catalyzes the reaction between ATP and alpha-D-glucose 1-phosphate (G1P) to produce pyrophosphate and ADP-Glc. This Pasteurella multocida (strain Pm70) protein is Glucose-1-phosphate adenylyltransferase.